The following is a 548-amino-acid chain: Leucine-rich repeat LGI family member 3 (548 aa).

A signal peptide spans 1–30; the sequence is MAGLRARRGPGRRLLVLSTLGFCLMLQVSA. The region spanning 31–64 is the LRRNT domain; that stretch reads KRPPKTPPCPPSCSCTRDTAFCVDSKSVPKNLPS. LRR repeat units lie at residues 89–110, 113–134, and 137–158; these read LLQF…AFIG, HLQY…TFRG, and SLTH…IFRP. Residues 170–220 enclose the LRRCT domain; the sequence is NALNCDCKVKWLVEWLAHTNTTVAPIYCASPPRFQEHKVQDLPLREFDCIT. An N-linked (GlcNAc...) asparagine glycan is attached at Asn-189. EAR repeat units lie at residues 222-264 and 268-310; these read DFVL…KWDY and QLRD…HWDP. Asn-311 carries N-linked (GlcNAc...) asparagine glycosylation. EAR repeat units follow at residues 314–361, 363–406, 410–453, 455–497, and 501–543; these read RFTK…RWHQ, GFYS…QWSR, QFVA…RWEG, RFSE…QWDE, and KFVR…RHVV.

As to quaternary structure, interacts with STX1A. As to expression, brain.

The protein localises to the secreted. It is found in the cytoplasmic vesicle. Its subcellular location is the secretory vesicle. It localises to the synaptic vesicle. The protein resides in the synapse. The protein localises to the synaptosome. It is found in the cell projection. Its subcellular location is the axon. Functionally, may participate in the regulation of neuronal exocytosis. The sequence is that of Leucine-rich repeat LGI family member 3 (Lgi3) from Mus musculus (Mouse).